The following is a 294-amino-acid chain: tRNA dimethylallyltransferase (294 aa).

ATP is bound at residue 10 to 17; the sequence is GPTAVGKT. Residue 12 to 17 participates in substrate binding; the sequence is TAVGKT. Residues 35–38 are interaction with substrate tRNA; that stretch reads DSQQ.

Belongs to the IPP transferase family. In terms of assembly, monomer. Mg(2+) is required as a cofactor.

It catalyses the reaction adenosine(37) in tRNA + dimethylallyl diphosphate = N(6)-dimethylallyladenosine(37) in tRNA + diphosphate. Catalyzes the transfer of a dimethylallyl group onto the adenine at position 37 in tRNAs that read codons beginning with uridine, leading to the formation of N6-(dimethylallyl)adenosine (i(6)A). This Streptococcus pneumoniae (strain Taiwan19F-14) protein is tRNA dimethylallyltransferase.